We begin with the raw amino-acid sequence, 351 residues long: Glycerol-3-phosphate dehydrogenase [NAD(P)+] (351 aa).

Residues Ser18, Trp19, Arg38, and Lys122 each contribute to the NADPH site. Sn-glycerol 3-phosphate-binding residues include Lys122, Gly153, and Ser155. Ala157 lines the NADPH pocket. Sn-glycerol 3-phosphate-binding residues include Lys208, Asp261, Ser271, Arg272, and Asn273. The active-site Proton acceptor is the Lys208. Residue Arg272 participates in NADPH binding. Glu297 contacts NADPH.

It belongs to the NAD-dependent glycerol-3-phosphate dehydrogenase family.

The protein resides in the cytoplasm. It carries out the reaction sn-glycerol 3-phosphate + NAD(+) = dihydroxyacetone phosphate + NADH + H(+). The catalysed reaction is sn-glycerol 3-phosphate + NADP(+) = dihydroxyacetone phosphate + NADPH + H(+). It functions in the pathway membrane lipid metabolism; glycerophospholipid metabolism. Catalyzes the reduction of the glycolytic intermediate dihydroxyacetone phosphate (DHAP) to sn-glycerol 3-phosphate (G3P), the key precursor for phospholipid synthesis. This chain is Glycerol-3-phosphate dehydrogenase [NAD(P)+], found in Bordetella pertussis (strain Tohama I / ATCC BAA-589 / NCTC 13251).